The primary structure comprises 1404 residues: DNA-directed RNA polymerase subunit beta' (1404 aa).

4 residues coordinate Zn(2+): cysteine 70, cysteine 72, cysteine 85, and cysteine 88. Positions 460, 462, and 464 each coordinate Mg(2+). Cysteine 814, cysteine 889, cysteine 896, and cysteine 899 together coordinate Zn(2+).

Belongs to the RNA polymerase beta' chain family. As to quaternary structure, the RNAP catalytic core consists of 2 alpha, 1 beta, 1 beta' and 1 omega subunit. When a sigma factor is associated with the core the holoenzyme is formed, which can initiate transcription. The cofactor is Mg(2+). Requires Zn(2+) as cofactor.

It catalyses the reaction RNA(n) + a ribonucleoside 5'-triphosphate = RNA(n+1) + diphosphate. In terms of biological role, DNA-dependent RNA polymerase catalyzes the transcription of DNA into RNA using the four ribonucleoside triphosphates as substrates. The chain is DNA-directed RNA polymerase subunit beta' from Xanthomonas axonopodis pv. citri (strain 306).